The following is a 405-amino-acid chain: Probable tRNA sulfurtransferase (405 aa).

Positions 60–165 constitute a THUMP domain; sequence TEVDKRLKKV…QDAVYISNQL (106 aa). Residues 183-184, 208-209, R265, G287, and Q296 each bind ATP; these read ML and HF.

Belongs to the ThiI family.

It localises to the cytoplasm. It carries out the reaction [ThiI sulfur-carrier protein]-S-sulfanyl-L-cysteine + a uridine in tRNA + 2 reduced [2Fe-2S]-[ferredoxin] + ATP + H(+) = [ThiI sulfur-carrier protein]-L-cysteine + a 4-thiouridine in tRNA + 2 oxidized [2Fe-2S]-[ferredoxin] + AMP + diphosphate. The catalysed reaction is [ThiS sulfur-carrier protein]-C-terminal Gly-Gly-AMP + S-sulfanyl-L-cysteinyl-[cysteine desulfurase] + AH2 = [ThiS sulfur-carrier protein]-C-terminal-Gly-aminoethanethioate + L-cysteinyl-[cysteine desulfurase] + A + AMP + 2 H(+). The protein operates within cofactor biosynthesis; thiamine diphosphate biosynthesis. Catalyzes the ATP-dependent transfer of a sulfur to tRNA to produce 4-thiouridine in position 8 of tRNAs, which functions as a near-UV photosensor. Also catalyzes the transfer of sulfur to the sulfur carrier protein ThiS, forming ThiS-thiocarboxylate. This is a step in the synthesis of thiazole, in the thiamine biosynthesis pathway. The sulfur is donated as persulfide by IscS. The sequence is that of Probable tRNA sulfurtransferase from Lactobacillus acidophilus (strain ATCC 700396 / NCK56 / N2 / NCFM).